A 283-amino-acid polypeptide reads, in one-letter code: NFU1 iron-sulfur cluster scaffold homolog, mitochondrial (283 aa).

A mitochondrion-targeting transit peptide spans 1–30 (MSKFLSQAALNTLRNTRLGSRQLVRSFAGI). Residues 182 to 250 (IKELLDTRIR…IPEVESVEQV (69 aa)) are nifU. [4Fe-4S] cluster is bound by residues C219 and C222.

Belongs to the NifU family.

The protein resides in the mitochondrion. Functionally, molecular scaffold for [Fe-S] cluster assembly of mitochondrial iron-sulfur proteins. The sequence is that of NFU1 iron-sulfur cluster scaffold homolog, mitochondrial from Drosophila yakuba (Fruit fly).